A 521-amino-acid chain; its full sequence is Formate--tetrahydrofolate ligase (521 aa).

It belongs to the formate--tetrahydrofolate ligase family.

The enzyme catalyses (6S)-5,6,7,8-tetrahydrofolate + formate + ATP = (6R)-10-formyltetrahydrofolate + ADP + phosphate. The protein operates within one-carbon metabolism; tetrahydrofolate interconversion. The polypeptide is Formate--tetrahydrofolate ligase (Ureaplasma parvum serovar 3 (strain ATCC 700970)).